Consider the following 330-residue polypeptide: Geranylgeranyl diphosphate synthase (330 aa).

Isopentenyl diphosphate is bound by residues Lys43, Arg46, and His75. 2 residues coordinate Mg(2+): Asp82 and Asp86. Arg91 contributes to the an all-trans-polyprenyl diphosphate binding site. Arg92 is an isopentenyl diphosphate binding site. Positions 175, 176, 213, 230, and 240 each coordinate an all-trans-polyprenyl diphosphate.

Belongs to the FPP/GGPP synthase family. The cofactor is Mg(2+).

It catalyses the reaction isopentenyl diphosphate + (2E,6E)-farnesyl diphosphate = (2E,6E,10E)-geranylgeranyl diphosphate + diphosphate. It participates in isoprenoid biosynthesis; geranylgeranyl diphosphate biosynthesis; geranylgeranyl diphosphate from farnesyl diphosphate and isopentenyl diphosphate: step 1/1. Catalyzes the condensation of isopentenyl pyrophosphate with the allylic pyrophosphates to yield geranylgeranyl diphosphate (GGPP) which is a precursor of the ether-linked lipids. It is able to use dimethylallyl diphosphate (DMAPP), geranyl diphosphate (GPP), and (all-E)-geranyl diphosphate (E-FPP) as an allylic substrate. The polypeptide is Geranylgeranyl diphosphate synthase (gds) (Sulfolobus acidocaldarius (strain ATCC 33909 / DSM 639 / JCM 8929 / NBRC 15157 / NCIMB 11770)).